The primary structure comprises 860 residues: DNA gyrase subunit A (860 aa).

The 470-residue stretch at 34 to 503 (LPDARDGLKP…EDGELIDTDL (470 aa)) folds into the Topo IIA-type catalytic domain. Y122 serves as the catalytic O-(5'-phospho-DNA)-tyrosine intermediate. The short motif at 530–536 (QNRATRG) is the GyrA-box element.

Belongs to the type II topoisomerase GyrA/ParC subunit family. Heterotetramer, composed of two GyrA and two GyrB chains. In the heterotetramer, GyrA contains the active site tyrosine that forms a transient covalent intermediate with DNA, while GyrB binds cofactors and catalyzes ATP hydrolysis.

Its subcellular location is the cytoplasm. It carries out the reaction ATP-dependent breakage, passage and rejoining of double-stranded DNA.. Its function is as follows. A type II topoisomerase that negatively supercoils closed circular double-stranded (ds) DNA in an ATP-dependent manner to modulate DNA topology and maintain chromosomes in an underwound state. Negative supercoiling favors strand separation, and DNA replication, transcription, recombination and repair, all of which involve strand separation. Also able to catalyze the interconversion of other topological isomers of dsDNA rings, including catenanes and knotted rings. Type II topoisomerases break and join 2 DNA strands simultaneously in an ATP-dependent manner. In Synechocystis sp. (strain ATCC 27184 / PCC 6803 / Kazusa), this protein is DNA gyrase subunit A.